The primary structure comprises 471 residues: ATP synthase subunit beta (471 aa).

Position 158-165 (158-165 (GGAGCGKT)) interacts with ATP.

The protein belongs to the ATPase alpha/beta chains family. As to quaternary structure, F-type ATPases have 2 components, CF(1) - the catalytic core - and CF(0) - the membrane proton channel. CF(1) has five subunits: alpha(3), beta(3), gamma(1), delta(1), epsilon(1). CF(0) has three main subunits: a(1), b(2) and c(9-12). The alpha and beta chains form an alternating ring which encloses part of the gamma chain. CF(1) is attached to CF(0) by a central stalk formed by the gamma and epsilon chains, while a peripheral stalk is formed by the delta and b chains.

The protein localises to the cell inner membrane. It carries out the reaction ATP + H2O + 4 H(+)(in) = ADP + phosphate + 5 H(+)(out). Its function is as follows. Produces ATP from ADP in the presence of a proton gradient across the membrane. The catalytic sites are hosted primarily by the beta subunits. The polypeptide is ATP synthase subunit beta (Desulfotalea psychrophila (strain LSv54 / DSM 12343)).